A 214-amino-acid polypeptide reads, in one-letter code: Cytochrome b (214 aa).

4 consecutive transmembrane segments (helical) span residues 31 to 51, 75 to 96, 111 to 131, and 176 to 196; these read FGSM…FLAI, WIMQ…YTHI, WLSG…GYVL, and FFAL…IHII. Residues histidine 81 and histidine 95 each coordinate heme b. Residues histidine 180 and histidine 194 each coordinate heme b. Histidine 199 provides a ligand contact to a ubiquinone.

The protein belongs to the cytochrome b family. In terms of assembly, the cytochrome bc1 complex contains 3 respiratory subunits (MT-CYB, CYC1 and UQCRFS1), 2 core proteins (UQCRC1 and UQCRC2) and probably 6 low-molecular weight proteins. It depends on heme b as a cofactor.

It is found in the mitochondrion inner membrane. In terms of biological role, component of the ubiquinol-cytochrome c reductase complex (complex III or cytochrome b-c1 complex) that is part of the mitochondrial respiratory chain. The b-c1 complex mediates electron transfer from ubiquinol to cytochrome c. Contributes to the generation of a proton gradient across the mitochondrial membrane that is then used for ATP synthesis. This Cerastes cerastes (Horned desert viper) protein is Cytochrome b (MT-CYB).